The primary structure comprises 306 residues: Aquaporin-1 (306 aa).

Positions 1-23 (MASTHSSLTTVQNNANNKSNRTL) are enriched in polar residues. The disordered stretch occupies residues 1-24 (MASTHSSLTTVQNNANNKSNRTLN). Residues 1 to 59 (MASTHSSLTTVQNNANNKSNRTLNTERRLSMESSVFTLYNKAADELDTSQRSAFQACHR) lie on the Cytoplasmic side of the membrane. The helical transmembrane segment at 60 to 80 (EFLAEFIGTVILVLLTCGFCA) threads the bilayer. At 81–92 (EQTLHIEESKSW) the chain is on the extracellular side. The chain crosses the membrane as a helical span at residues 93–113 (LTSSFGSGLSVLIGICVSGHV). At 114–145 (SGAHLNPAVTIAFCIFSGFPIRKVPSYITAQL) the chain is on the cytoplasmic side. Positions 119 to 121 (NPA) match the NPA 1 motif. Residues 146-166 (LGAFAGAALLYIIIEPAIVQF) form a helical membrane-spanning segment. Residues 167–192 (DGGQRYILGEKSTAGIFGTYPPLYVG) are Extracellular-facing. The chain crosses the membrane as a helical span at residues 193-213 (IGSAIASEIMGTAMLLLVIMV). Over 214 to 226 (TGHPNNLPYKSAQ) the chain is Cytoplasmic. Residues 227–247 (GAMIALGITTISLCIGYTSGF) form a helical membrane-spanning segment. Over 248–278 (SLNPARDFGPRLFTAIAGWGFDVFKVYHYYA) the chain is Extracellular. The short motif at 250–252 (NPA) is the NPA 2 element. A helical transmembrane segment spans residues 279-299 (LVPMFAPILGGLVGLMLMMPF). Residues 300 to 306 (SFLSVRA) are Cytoplasmic-facing.

This sequence belongs to the MIP/aquaporin (TC 1.A.8) family.

It is found in the cell membrane. It catalyses the reaction H2O(in) = H2O(out). In terms of biological role, water channel required to facilitate the transport of water across membranes. Contributes to water uptake of spores during the early stages of spore germination. Aquaporins AQP1 and AQP2 act as extracellular pH sensors and enable the spores to hydrate under favorable conditions and to commence germination. Wounded vegetables and fruit present acidic pH, so the optimal pH range for germination is adapted to the relevant host pH. This chain is Aquaporin-1, found in Rhizopus delemar (strain RA 99-880 / ATCC MYA-4621 / FGSC 9543 / NRRL 43880) (Mucormycosis agent).